A 164-amino-acid chain; its full sequence is Cytochrome c-type biogenesis protein CcmE (164 aa).

The Cytoplasmic segment spans residues 1-8; it reads MNPRRKSR. Residues 9 to 29 form a helical; Signal-anchor for type II membrane protein membrane-spanning segment; that stretch reads LYLAIVVLIGVALTATLMLYA. Topologically, residues 30 to 164 are periplasmic; it reads LRSNIDLFYT…ATPQNEGAKS (135 aa). Heme-binding residues include His-130 and Tyr-134. Residues 131 to 148 show a composition bias toward basic and acidic residues; that stretch reads DEKYTPPEVADAMKENHK. Residues 131–164 are disordered; sequence DEKYTPPEVADAMKENHKGPASAYATPQNEGAKS. Over residues 155 to 164 the composition is skewed to polar residues; that stretch reads ATPQNEGAKS.

Belongs to the CcmE/CycJ family.

Its subcellular location is the cell inner membrane. Its function is as follows. Heme chaperone required for the biogenesis of c-type cytochromes. Transiently binds heme delivered by CcmC and transfers the heme to apo-cytochromes in a process facilitated by CcmF and CcmH. This chain is Cytochrome c-type biogenesis protein CcmE, found in Serratia proteamaculans (strain 568).